The sequence spans 176 residues: Lipoprotein signal peptidase (176 aa).

The next 4 helical transmembrane spans lie at 11–31 (AFVA…LDQL), 38–58 (ATMQ…VLVF), 76–96 (WFFT…MHQH), and 101–121 (LLPA…VDRL). Catalysis depends on residues aspartate 128 and aspartate 146. A helical membrane pass occupies residues 139 to 159 (WPAFNLADSAITLGVGLMLWA).

The protein belongs to the peptidase A8 family.

The protein localises to the cell inner membrane. The enzyme catalyses Release of signal peptides from bacterial membrane prolipoproteins. Hydrolyzes -Xaa-Yaa-Zaa-|-(S,diacylglyceryl)Cys-, in which Xaa is hydrophobic (preferably Leu), and Yaa (Ala or Ser) and Zaa (Gly or Ala) have small, neutral side chains.. The protein operates within protein modification; lipoprotein biosynthesis (signal peptide cleavage). In terms of biological role, this protein specifically catalyzes the removal of signal peptides from prolipoproteins. The sequence is that of Lipoprotein signal peptidase from Azoarcus sp. (strain BH72).